The sequence spans 573 residues: Pentatricopeptide repeat-containing protein At3g62890 (573 aa).

PPR repeat units lie at residues 23-60, 61-95, 96-126, 127-161, 162-188, 198-232, 233-263, 265-295, 301-336, and 337-367; these read ESFLWNIIIRAIVHNVSSPQRHSPISVYLRMRNHRVSP, DFHTFPFLLPSFHNPLHLPLGQRTHAQILLFGLDK, DPFVRTSLLNMYSSCGDLRSAQRVFDDSGSK, DLPAWNSVVNAYAKAGLIDDARKLFDEMPERNVIS, WSCLINGYVMCGKYKEALDLFREMQLP, NEFTMSTVLSACGRLGALEQGKWVHAYIDKYHVEI, DIVLGTALIDMYAKCGSLERAKRVFNALGSK, DVKAYSAMICCLAMYGLTDECFQLFSEMTTS, NSVTFVGILGACVHRGLINEGKSYFKMMIEEFGITP, and SIQHYGCMVDLYGRSGLIKEAESFIASMPME. The interval 372–447 is type E motif; degenerate; it reads IWGSLLSGSR…VPGCSYVEVE (76 aa). Residues 448 to 478 form a type E(+) motif region; it reads GVVHEFVVGDESQQESERIYAMLDEIMQRLR. The tract at residues 479 to 573 is type DYW motif; that stretch reads EAGYVTDTKE…DGSCSCRDFW (95 aa).

Belongs to the PPR family. PCMP-H subfamily.

This chain is Pentatricopeptide repeat-containing protein At3g62890 (PCMP-H82), found in Arabidopsis thaliana (Mouse-ear cress).